A 364-amino-acid polypeptide reads, in one-letter code: Histidinol-phosphate aminotransferase 1 (364 aa).

At Lys211 the chain carries N6-(pyridoxal phosphate)lysine.

It belongs to the class-II pyridoxal-phosphate-dependent aminotransferase family. Histidinol-phosphate aminotransferase subfamily. Homodimer. Pyridoxal 5'-phosphate is required as a cofactor.

The enzyme catalyses L-histidinol phosphate + 2-oxoglutarate = 3-(imidazol-4-yl)-2-oxopropyl phosphate + L-glutamate. It functions in the pathway amino-acid biosynthesis; L-histidine biosynthesis; L-histidine from 5-phospho-alpha-D-ribose 1-diphosphate: step 7/9. This is Histidinol-phosphate aminotransferase 1 from Legionella pneumophila subsp. pneumophila (strain Philadelphia 1 / ATCC 33152 / DSM 7513).